A 145-amino-acid polypeptide reads, in one-letter code: LIRP (145 aa).

The segment at residues 1–19 (MWKLCLRLLAVLAVCLSTA) is a signal peptide (or 22). Propeptides lie at residues 20–33 (TQAQ…SPKR) and 117–122 (FRRRTR). Cystine bridges form between Cys44-Cys129, Cys56-Cys142, and Cys128-Cys133.

Belongs to the insulin family. As to quaternary structure, heterodimer of a B chain and an A chain linked by two disulfide bonds.

It localises to the secreted. The sequence is that of LIRP from Locusta migratoria (Migratory locust).